Consider the following 69-residue polypeptide: MKPFLVTLAVLLLFFQVTAVGSIEKCWNFRGSCRDECLKNEKVYVFCMSGKLCCLKPKDQPHLPQRTKN.

The signal sequence occupies residues Met1 to Ala19. Disulfide bonds link Cys26-Cys53, Cys33-Cys47, and Cys37-Cys54.

Belongs to the beta-defensin family.

It is found in the secreted. Has antibacterial activity. The sequence is that of Beta-defensin 122 (DEFB122) from Macaca mulatta (Rhesus macaque).